A 150-amino-acid polypeptide reads, in one-letter code: UPF0178 protein Sbal195_1808 (150 aa).

This sequence belongs to the UPF0178 family.

The chain is UPF0178 protein Sbal195_1808 from Shewanella baltica (strain OS195).